Here is a 521-residue protein sequence, read N- to C-terminus: Protein NRT1/ PTR FAMILY 5.5 (521 aa).

The next 12 helical transmembrane spans lie at 3-23 (VLSW…LYLT), 35-55 (AIVN…QFLV), 62-82 (FWML…LAIS), 96-116 (FYVA…SLGV), 134-154 (LVSF…AAIA), 165-185 (FTIP…GACS), 279-299 (VPLF…NTFF), 310-327 (FGSW…SEAA), 356-376 (PYGI…AAHV), 394-414 (VPMS…ITGI), 440-460 (VGVC…VGSV), and 478-498 (YYWV…IVTY).

It belongs to the major facilitator superfamily. Proton-dependent oligopeptide transporter (POT/PTR) (TC 2.A.17) family. In terms of tissue distribution, expressed in roots.

The protein localises to the membrane. The chain is Protein NRT1/ PTR FAMILY 5.5 (NPF5.5) from Arabidopsis thaliana (Mouse-ear cress).